An 81-amino-acid polypeptide reads, in one-letter code: Large ribosomal subunit protein bL27 (81 aa).

The tract at residues 1–22 is disordered; it reads MAHKKGQGSSRNGRDSNAQRRG.

This sequence belongs to the bacterial ribosomal protein bL27 family.

The sequence is that of Large ribosomal subunit protein bL27 from Rhodopirellula baltica (strain DSM 10527 / NCIMB 13988 / SH1).